Reading from the N-terminus, the 281-residue chain is MAKTRTSSLRNRRQLKPAVAATADDDKDGVFMVLLSCFKIFVCFAIVLITAVAWGLIMVLLLPWPYMRIRLGNLYGHIIGGLVIWIYGIPIKIQGSEHTKKRAIYISNHASPIDAFFVMWLAPIGTVGVAKKEVIWYPLLGQLYTLAHHIRIDRSNPAAAIQSMKEAVRVITEKNLSLIMFPEGTRSRDGRLLPFKKGFVHLALQSHLPIVPMILTGTHLAWRKGTFRVRPVPITVKYLPPINTDDWTVDKIDDYVKMIHDVYVRNLPASQKPLGSTNRSN.

3 consecutive transmembrane segments (helical) span residues 40-60, 71-91, and 110-130; these read IFVCFAIVLITAVAWGLIMVL, LGNLYGHIIGGLVIWIYGIPI, and ASPIDAFFVMWLAPIGTVGVA. Positions 109–114 match the HXXXXD motif motif; sequence HASPID.

Belongs to the 1-acyl-sn-glycerol-3-phosphate acyltransferase family.

Its subcellular location is the membrane. It catalyses the reaction a 1-acyl-sn-glycero-3-phosphate + an acyl-CoA = a 1,2-diacyl-sn-glycero-3-phosphate + CoA. Its pathway is phospholipid metabolism; CDP-diacylglycerol biosynthesis; CDP-diacylglycerol from sn-glycerol 3-phosphate: step 2/3. Its function is as follows. Converts lysophosphatidic acid (LPA) into phosphatidic acid by incorporating acyl moiety at the 2 position. This enzyme uses erucoyl-CoA as an acyl donor. In Limnanthes douglasii (Douglas' meadowfoam), this protein is 1-acyl-sn-glycerol-3-phosphate acyltransferase (PLSC).